The sequence spans 120 residues: Large ribosomal subunit protein bL12 (120 aa).

It belongs to the bacterial ribosomal protein bL12 family. As to quaternary structure, homodimer. Part of the ribosomal stalk of the 50S ribosomal subunit. Forms a multimeric L10(L12)X complex, where L10 forms an elongated spine to which 2 to 4 L12 dimers bind in a sequential fashion. Binds GTP-bound translation factors.

In terms of biological role, forms part of the ribosomal stalk which helps the ribosome interact with GTP-bound translation factors. Is thus essential for accurate translation. The sequence is that of Large ribosomal subunit protein bL12 from Alkaliphilus metalliredigens (strain QYMF).